Here is a 489-residue protein sequence, read N- to C-terminus: Ribonuclease G (489 aa).

Residues 39–128 enclose the S1 motif domain; that stretch reads GNIYKGRVSR…LTTDITLPSR (90 aa). Mg(2+)-binding residues include Asp304 and Asp347.

This sequence belongs to the RNase E/G family. RNase G subfamily. Homodimer, and possible higher multimers. It depends on Mg(2+) as a cofactor.

The protein resides in the cytoplasm. Its function is as follows. Acts in the processing of the 5'-end of precursors of 16S rRNA. Confers adaptive resistance to aminoglycoside antibiotics through modulation of 16S rRNA processing. An endoribonuclease, it prefers 5'-monophosphorylated substrates and cleaves single-stranded sites rich in A and U residues; also contributes to 23S rRNA processing, tRNA processing and mRNA turnover. Involved in decay of speF mRNA, has a preference for adenine nucleotides. This chain is Ribonuclease G, found in Salmonella typhimurium (strain SL1344).